Here is a 144-residue protein sequence, read N- to C-terminus: Large ribosomal subunit protein uL13 (144 aa).

It belongs to the universal ribosomal protein uL13 family. Part of the 50S ribosomal subunit.

Functionally, this protein is one of the early assembly proteins of the 50S ribosomal subunit, although it is not seen to bind rRNA by itself. It is important during the early stages of 50S assembly. In Clostridium kluyveri (strain NBRC 12016), this protein is Large ribosomal subunit protein uL13.